The sequence spans 317 residues: Ribosomal protein L11 methyltransferase (317 aa).

S-adenosyl-L-methionine is bound by residues T158, G179, D201, and N244.

Belongs to the methyltransferase superfamily. PrmA family.

It localises to the cytoplasm. The catalysed reaction is L-lysyl-[protein] + 3 S-adenosyl-L-methionine = N(6),N(6),N(6)-trimethyl-L-lysyl-[protein] + 3 S-adenosyl-L-homocysteine + 3 H(+). Methylates ribosomal protein L11. This chain is Ribosomal protein L11 methyltransferase, found in Streptococcus uberis (strain ATCC BAA-854 / 0140J).